The chain runs to 316 residues: HPr kinase/phosphorylase (316 aa).

Active-site residues include histidine 143 and lysine 164. Residue 158-165 (GEAGSGKS) participates in ATP binding. A Mg(2+)-binding site is contributed by serine 165. The active-site Proton acceptor; for phosphorylation activity. Proton donor; for dephosphorylation activity is the aspartate 182. Residues 206–215 (LEVRGLGVLN) are important for the catalytic mechanism of both phosphorylation and dephosphorylation. A Mg(2+)-binding site is contributed by glutamate 207. Residue arginine 251 is part of the active site. The interval 272–277 (PVMPGR) is important for the catalytic mechanism of dephosphorylation.

The protein belongs to the HPrK/P family. In terms of assembly, homohexamer. Requires Mg(2+) as cofactor.

It carries out the reaction [HPr protein]-L-serine + ATP = [HPr protein]-O-phospho-L-serine + ADP + H(+). The catalysed reaction is [HPr protein]-O-phospho-L-serine + phosphate + H(+) = [HPr protein]-L-serine + diphosphate. Catalyzes the ATP- as well as the pyrophosphate-dependent phosphorylation of a specific serine residue in HPr, a phosphocarrier protein of the phosphoenolpyruvate-dependent sugar phosphotransferase system (PTS). HprK/P also catalyzes the pyrophosphate-producing, inorganic phosphate-dependent dephosphorylation (phosphorolysis) of seryl-phosphorylated HPr (P-Ser-HPr). In Xanthomonas euvesicatoria pv. vesicatoria (strain 85-10) (Xanthomonas campestris pv. vesicatoria), this protein is HPr kinase/phosphorylase.